We begin with the raw amino-acid sequence, 289 residues long: MSNLINIKNRINVVTNTRKITNAMQLVSTSKLHRIINLTKNIKAYQNLVETTFDNIVSKITQEELNEIFPPKQETDATLYIIVTSDIGLCGSYNSNVINELKKVIKPSDLVITLGTKGLNWIRVSKFKDQLYKAYVNLEDKLDYSIATEIGNLNFELFAKNKISSCKIIYTKFVNNLIQEVSVKQLFPYDSSHLEIKKESEQMEGDIEFEPSAEIILQRAFPLYVSSMIYVLVSLSKVSELASRRVAMESATDNADEIINDLNLEYNSKRQSVITQEITEIVAGAQATN.

This sequence belongs to the ATPase gamma chain family. F-type ATPases have 2 components, CF(1) - the catalytic core - and CF(0) - the membrane proton channel. CF(1) has five subunits: alpha(3), beta(3), gamma(1), delta(1), epsilon(1). CF(0) has three main subunits: a, b and c.

Its subcellular location is the cell membrane. In terms of biological role, produces ATP from ADP in the presence of a proton gradient across the membrane. The gamma chain is believed to be important in regulating ATPase activity and the flow of protons through the CF(0) complex. This Mycoplasmopsis synoviae (strain 53) (Mycoplasma synoviae) protein is ATP synthase gamma chain.